Reading from the N-terminus, the 27-residue chain is Weak neurotoxin E3 (27 aa).

Expressed by the venom gland.

Its subcellular location is the secreted. Binds to muscle nicotinic acetylcholine receptor (nAChR) and inhibit acetylcholine from binding to the receptor, thereby impairing neuromuscular transmission. In Micrurus pyrrhocryptus (Coral snake), this protein is Weak neurotoxin E3.